The following is a 368-amino-acid chain: N-acetylneuraminate epimerase (368 aa).

The first 19 residues, 1–19, serve as a signal peptide directing secretion; the sequence is MNKTITALAILMASFAANA. Kelch repeat units follow at residues 40-84, 86-137, 139-173, 174-219, 222-265, 287-336, and 338-367; these read TVYI…AFID, NLYV…FVHN, KAYVTGGVNQNIFNGYFEDLNEAGKDSTAVDKINA, HYFD…VNKG, TWLI…VAGG, ENYQ…PWNN, and LLIIGGETAGGKAVTDSVLISVKDNKVTVQ. Catalysis depends on Glu228, which acts as the Proton acceptor.

It belongs to the NanM family. As to quaternary structure, homodimer.

The protein localises to the periplasm. The catalysed reaction is N-acetyl-alpha-neuraminate = N-acetyl-beta-neuraminate. Its function is as follows. Converts alpha-N-acetylneuranimic acid (Neu5Ac) to the beta-anomer, accelerating the equilibrium between the alpha- and beta-anomers. Probably facilitates sialidase-negative bacteria to compete successfully for limited amounts of extracellular Neu5Ac, which is likely taken up in the beta-anomer. In addition, the rapid removal of sialic acid from solution might be advantageous to the bacterium to damp down host responses. The chain is N-acetylneuraminate epimerase from Escherichia coli O157:H7.